The primary structure comprises 1009 residues: Dihydropyrimidine dehydrogenase [NADP(+)] (1009 aa).

Residues 69–99 form the 4Fe-4S ferredoxin-type 1 domain; that stretch reads RGALFESARCLKCADAPCQKGCPTQLDIKSF. The [4Fe-4S] cluster site is built by Cys78, Cys81, Cys86, and Cys90. Val128 is an FAD binding site. 4 residues coordinate [4Fe-4S] cluster: Cys129, Cys135, Cys139, and Gln155. Residues 193 to 197, 217 to 225, Arg234, and Leu260 each bind FAD; these read GCGPT and EKEQYLGGL. NADP(+) contacts are provided by residues 339–342, 363–364, Arg370, 436–438, and 479–484; these read AGDT, RR, AFG, and DLVGNG. 478 to 486 contacts FAD; that stretch reads GDLVGNGTT. Residues Ser548 and 572–573 contribute to the FMN site; that span reads KT. Substrate is bound by residues Asn607 and 666–668; that span reads NLS. Cys669 serves as the catalytic Proton acceptor. FMN is bound at residue Lys707. A substrate-binding site is contributed by 734-735; sequence NT. FMN is bound by residues Gly765, 791-793, and 814-815; these read TGG and CS. 4Fe-4S ferredoxin-type domains follow at residues 932–964 and 965–995; these read VVALIDEDKCINCGKCYMTCNDSGYQAIKFDGK and THIPLVTDLCTGCDLCLSVCPVPDCITMVPR. The [4Fe-4S] cluster site is built by Cys941, Cys944, Cys947, Cys951, Cys974, Cys977, Cys980, and Cys984.

This sequence belongs to the dihydropyrimidine dehydrogenase family. In terms of assembly, homodimer. The cofactor is [4Fe-4S] cluster. FAD is required as a cofactor. FMN serves as cofactor.

It is found in the cytoplasm. The catalysed reaction is 5,6-dihydrouracil + NADP(+) = uracil + NADPH + H(+). It functions in the pathway amino-acid biosynthesis; beta-alanine biosynthesis. In terms of biological role, involved in pyrimidine base degradation. Catalyzes the reduction of uracil and thymine. This chain is Dihydropyrimidine dehydrogenase [NADP(+)] (pyd1), found in Dictyostelium discoideum (Social amoeba).